The primary structure comprises 269 residues: Tryptophan synthase alpha chain (269 aa).

Residues Glu-49 and Asp-60 each act as proton acceptor in the active site.

Belongs to the TrpA family. Tetramer of two alpha and two beta chains.

It catalyses the reaction (1S,2R)-1-C-(indol-3-yl)glycerol 3-phosphate + L-serine = D-glyceraldehyde 3-phosphate + L-tryptophan + H2O. The protein operates within amino-acid biosynthesis; L-tryptophan biosynthesis; L-tryptophan from chorismate: step 5/5. Its function is as follows. The alpha subunit is responsible for the aldol cleavage of indoleglycerol phosphate to indole and glyceraldehyde 3-phosphate. The sequence is that of Tryptophan synthase alpha chain from Actinobacillus succinogenes (strain ATCC 55618 / DSM 22257 / CCUG 43843 / 130Z).